Reading from the N-terminus, the 521-residue chain is Envelope glycoprotein (521 aa).

A signal peptide spans 1–20 (MVDSTIRLVATIFLISLTQQ). Residues Asn-44, Asn-158, Asn-189, and Asn-396 are each glycosylated (N-linked (GlcNAc...) asparagine; by host). The chain crosses the membrane as a helical span at residues 501-517 (ISWVVVIGVVLVGVCLM).

As to quaternary structure, homooligomer; disulfide-linked (possibly homodimer).

It is found in the virion membrane. In terms of biological role, attaches the virus to host cellular receptor and later induces fusion of virion with host membrane. This chain is Envelope glycoprotein (P4), found in Dhori virus (strain Indian/1313/61) (Dho).